The sequence spans 126 residues: Holo-[acyl-carrier-protein] synthase (126 aa).

Positions 9 and 58 each coordinate Mg(2+).

It belongs to the P-Pant transferase superfamily. AcpS family. The cofactor is Mg(2+).

It localises to the cytoplasm. The catalysed reaction is apo-[ACP] + CoA = holo-[ACP] + adenosine 3',5'-bisphosphate + H(+). Functionally, transfers the 4'-phosphopantetheine moiety from coenzyme A to a Ser of acyl-carrier-protein. The sequence is that of Holo-[acyl-carrier-protein] synthase from Serratia proteamaculans (strain 568).